The primary structure comprises 1475 residues: Mediator of RNA polymerase II transcription subunit 1.1 (1475 aa).

Disordered regions lie at residues 579-600 (STIG…LTSM), 645-894 (GLAS…KMRE), and 908-1475 (PDVE…IDDE). Over residues 655-666 (PVAAAAAAPGGP) the composition is skewed to low complexity. Residues 755–766 (QRSSSEQHNPNP) show a composition bias toward polar residues. Residues 767–800 (HQMSQYQMQQYQQNQQFRMHQMQQQQQQQFQMQS) show a composition bias toward low complexity. The span at 810–819 (TDEDSDEECD) shows a compositional bias: acidic residues. Over residues 829–838 (STSSRMSSVP) the composition is skewed to low complexity. Over residues 869 to 880 (TPSPLSAPPKPF) the composition is skewed to pro residues. Over residues 915-929 (QQLSSSSSSSQAEAS) the composition is skewed to low complexity. Residues 941–952 (PPKPSSSSAPPP) show a composition bias toward pro residues. Low complexity-rich tracts occupy residues 969-989 (QQEQ…SELA) and 1037-1049 (QKPT…STSS). Composition is skewed to basic and acidic residues over residues 1052–1070 (PPKK…EKLI), 1080–1148 (VVDD…EKEP), and 1155–1180 (EKKD…KEYS). Residues 1098 to 1135 (DRDRDEDREKVRDKEDKAQREKDKKEKERERRRQRDRD) adopt a coiled-coil conformation. Positions 1181–1193 (KASTTSLIPTLSL) are enriched in polar residues. The span at 1199–1215 (PKKDTVEEEKKDVKEEA) shows a compositional bias: basic and acidic residues. The segment covering 1242–1252 (APVAPAVQQQQ) has biased composition (low complexity). Pro residues predominate over residues 1281–1291 (PLQPPPPPQMT). Positions 1308-1317 (PGSSRPSGNR) are enriched in polar residues. Composition is skewed to pro residues over residues 1320–1334 (PLPP…PPPD) and 1425–1440 (PPAP…PKDP).

It belongs to the Mediator complex subunit 1 family. Component of the Mediator complex.

The protein resides in the nucleus. In terms of biological role, component of the Mediator complex, a coactivator involved in the regulated transcription of nearly all RNA polymerase II-dependent genes. Mediator functions as a bridge to convey information from gene-specific regulatory proteins to the basal RNA polymerase II transcription machinery. Mediator is recruited to promoters by direct interactions with regulatory proteins and serves as a scaffold for the assembly of a functional preinitiation complex with RNA polymerase II and the general transcription factors. The protein is Mediator of RNA polymerase II transcription subunit 1.1 (sop-3) of Caenorhabditis elegans.